We begin with the raw amino-acid sequence, 159 residues long: Phosphopantetheine adenylyltransferase (159 aa).

Thr10 is a binding site for substrate. ATP contacts are provided by residues 10-11 (TF) and His18. Residues Lys42, Leu74, and Arg88 each coordinate substrate. ATP-binding positions include 89–91 (GLR), Glu99, and 124–130 (YSFISSS).

It belongs to the bacterial CoaD family. As to quaternary structure, homohexamer. The cofactor is Mg(2+).

Its subcellular location is the cytoplasm. The catalysed reaction is (R)-4'-phosphopantetheine + ATP + H(+) = 3'-dephospho-CoA + diphosphate. It participates in cofactor biosynthesis; coenzyme A biosynthesis; CoA from (R)-pantothenate: step 4/5. Reversibly transfers an adenylyl group from ATP to 4'-phosphopantetheine, yielding dephospho-CoA (dPCoA) and pyrophosphate. The chain is Phosphopantetheine adenylyltransferase from Campylobacter hominis (strain ATCC BAA-381 / DSM 21671 / CCUG 45161 / LMG 19568 / NCTC 13146 / CH001A).